Reading from the N-terminus, the 326-residue chain is Ribonuclease Z (326 aa).

Zn(2+)-binding residues include H62, H64, D66, H67, H140, D211, and H269. D66 acts as the Proton acceptor in catalysis.

It belongs to the RNase Z family. Homodimer. It depends on Zn(2+) as a cofactor.

The enzyme catalyses Endonucleolytic cleavage of RNA, removing extra 3' nucleotides from tRNA precursor, generating 3' termini of tRNAs. A 3'-hydroxy group is left at the tRNA terminus and a 5'-phosphoryl group is left at the trailer molecule.. Functionally, zinc phosphodiesterase, which displays some tRNA 3'-processing endonuclease activity. Probably involved in tRNA maturation, by removing a 3'-trailer from precursor tRNA. The polypeptide is Ribonuclease Z (Synechocystis sp. (strain ATCC 27184 / PCC 6803 / Kazusa)).